The chain runs to 463 residues: Sporulation-specific protein 22 (463 aa).

Positions 1–25 are cleaved as a signal peptide; it reads MNRITRKSCLFAIIFASLFVTHALG. LRR repeat units lie at residues 127–147, 185–206, 207–233, 251–275, and 302–325; these read SPEL…LFQL, IEII…NFNK, VQEI…TIRG, LREV…KVKS, and INNV…LMIA. Residues asparagine 256, asparagine 314, and asparagine 327 are each glycosylated (N-linked (GlcNAc...) asparagine). A lipid anchor (GPI-anchor amidated asparagine) is attached at asparagine 440. Residues 441–463 constitute a propeptide, removed in mature form; that stretch reads SANPSMQLDPLLFGTCLVAMLLF.

It belongs to the SPS2 family.

The protein resides in the cell membrane. Functionally, redundant with SPS2 for the organization of the beta-glucan layer of the spore wall. This Saccharomyces cerevisiae (strain ATCC 204508 / S288c) (Baker's yeast) protein is Sporulation-specific protein 22 (SPS22).